The chain runs to 212 residues: Leucyl/phenylalanyl-tRNA--protein transferase (212 aa).

It belongs to the L/F-transferase family.

It localises to the cytoplasm. The enzyme catalyses N-terminal L-lysyl-[protein] + L-leucyl-tRNA(Leu) = N-terminal L-leucyl-L-lysyl-[protein] + tRNA(Leu) + H(+). The catalysed reaction is N-terminal L-arginyl-[protein] + L-leucyl-tRNA(Leu) = N-terminal L-leucyl-L-arginyl-[protein] + tRNA(Leu) + H(+). It catalyses the reaction L-phenylalanyl-tRNA(Phe) + an N-terminal L-alpha-aminoacyl-[protein] = an N-terminal L-phenylalanyl-L-alpha-aminoacyl-[protein] + tRNA(Phe). In terms of biological role, functions in the N-end rule pathway of protein degradation where it conjugates Leu, Phe and, less efficiently, Met from aminoacyl-tRNAs to the N-termini of proteins containing an N-terminal arginine or lysine. The sequence is that of Leucyl/phenylalanyl-tRNA--protein transferase from Jannaschia sp. (strain CCS1).